The primary structure comprises 1823 residues: WD repeat-containing protein DDB_G0292056 (1823 aa).

Positions Met1–Val68 are disordered. Positions Thr16–Asn61 are enriched in low complexity. 6 WD repeats span residues Gln138–Leu177, Ser182–Lys222, Ser228–Asn267, Val270–Thr310, Ile312–Pro354, and Gly360–Phe405. Disordered stretches follow at residues Pro418 to Thr461, Gln530 to Asn562, Asn649 to Lys687, Ile714 to Gly778, Ile805 to Gln840, Ile883 to Ser940, Ser966 to Arg996, Asn1014 to Pro1058, and Gln1122 to Ser1186. Low complexity-rich tracts occupy residues Thr419–Thr432 and Leu440–Thr461. Composition is skewed to low complexity over residues Asn654–Asn680 and Ser717–Gln748. Polar residues-rich tracts occupy residues Phe749–Ser768 and Met827–Gln840. Composition is skewed to low complexity over residues Asn885 to Asn926, Ser966 to Asn993, Asn1014 to Asn1041, and Ser1127 to Asn1183. The WD 7 repeat unit spans residues Ala1207–Lys1250. 3 disordered regions span residues Ser1264–Ser1307, Gln1697–Asn1725, and Pro1764–Asn1823. Low complexity predominate over residues Ser1282 to Ser1293. Positions Met1710–Asn1725 are enriched in polar residues.

In Dictyostelium discoideum (Social amoeba), this protein is WD repeat-containing protein DDB_G0292056.